The following is a 501-amino-acid chain: Glycoprotein 3-alpha-L-fucosyltransferase A (501 aa).

The Cytoplasmic portion of the chain corresponds to 1-39 (MGVFSNLRGPKIGLTHEELPVVANGSTSSSSSPSSFKRK). The chain crosses the membrane as a helical; Signal-anchor for type II membrane protein span at residues 40-60 (VSTFLPICVALVVIIEIGFLC). The Lumenal portion of the chain corresponds to 61–501 (RLDNASLVDT…PCPKFEVVFV (441 aa)). N-linked (GlcNAc...) asparagine glycans are attached at residues Asn64, Asn337, Asn420, and Asn481.

It belongs to the glycosyltransferase 10 family. It depends on Mg(2+) as a cofactor. Requires Mn(2+) as cofactor. In terms of processing, glycosylation may be important for enzymatic activity.

The protein localises to the golgi apparatus. It localises to the golgi stack membrane. The enzyme catalyses N(4)-{beta-D-GlcNAc-(1-&gt;2)-alpha-D-Man-(1-&gt;3)-[beta-D-GlcNAc-(1-&gt;2)-alpha-D-Man-(1-&gt;6)]-beta-D-Man-(1-&gt;4)-beta-D-GlcNAc-(1-&gt;4)-beta-D-GlcNAc}-L-asparaginyl-[protein] + GDP-beta-L-fucose = N(4)-{beta-D-GlcNAc-(1-&gt;2)-alpha-D-Man-(1-&gt;3)-[beta-D-GlcNAc-(1-&gt;2)-alpha-D-Man-(1-&gt;6)]-beta-D-Man-(1-&gt;4)-beta-D-GlcNAc-(1-&gt;4)-[alpha-L-Fuc(1-&gt;3)]-beta-D-GlcNAc}-L-asparaginyl-[protein] + GDP + H(+). The protein operates within protein modification; protein glycosylation. Inhibited by Cu(2+) and Zn(2+). In terms of biological role, involved in cell wall synthesis. Preferentially catalyzes the addition of fucose in alpha 1-3 linkage to the first GlcNAc residue next to the peptide chains in N-glycans. In Arabidopsis thaliana (Mouse-ear cress), this protein is Glycoprotein 3-alpha-L-fucosyltransferase A (FUT11).